The primary structure comprises 504 residues: Cytochrome P450 2K4 (504 aa).

A heme-binding site is contributed by Cys-447.

The protein belongs to the cytochrome P450 family. Heme serves as cofactor.

The protein localises to the endoplasmic reticulum membrane. It is found in the microsome membrane. It catalyses the reaction an organic molecule + reduced [NADPH--hemoprotein reductase] + O2 = an alcohol + oxidized [NADPH--hemoprotein reductase] + H2O + H(+). This chain is Cytochrome P450 2K4 (cyp2k4), found in Oncorhynchus mykiss (Rainbow trout).